Here is a 45-residue protein sequence, read N- to C-terminus: Mu-conotoxin-like Cal 12.1.1d (45 aa).

4 cysteine pairs are disulfide-bonded: cysteine 3–cysteine 16, cysteine 11–cysteine 28, cysteine 18–cysteine 33, and cysteine 27–cysteine 39. Tryptophan 17 is subject to 6'-bromotryptophan. Position 21 is a 4-carboxyglutamate (glutamate 21). Proline 23 carries the post-translational modification 4-hydroxyproline. Tryptophan 37 and tryptophan 38 each carry 6'-bromotryptophan. The residue at position 40 (proline 40) is a 4-hydroxyproline. The residue at position 44 (tryptophan 44) is a 6'-bromotryptophan.

In terms of tissue distribution, expressed by the venom duct.

It localises to the secreted. Its function is as follows. Mu-conotoxins block voltage-gated sodium channels. This toxin reversibly blocks voltage-gated sodium channel in cephalopods, with no alteration in the voltage dependence of sodium conductance or on the kinetics of inactivation. This is Mu-conotoxin-like Cal 12.1.1d from Californiconus californicus (California cone).